The following is a 198-amino-acid chain: dTTP/UTP pyrophosphatase (198 aa).

Asp72 acts as the Proton acceptor in catalysis.

The protein belongs to the Maf family. YhdE subfamily. A divalent metal cation is required as a cofactor.

It is found in the cytoplasm. The catalysed reaction is dTTP + H2O = dTMP + diphosphate + H(+). It catalyses the reaction UTP + H2O = UMP + diphosphate + H(+). Its function is as follows. Nucleoside triphosphate pyrophosphatase that hydrolyzes dTTP and UTP. May have a dual role in cell division arrest and in preventing the incorporation of modified nucleotides into cellular nucleic acids. This Pseudomonas fluorescens (strain Pf0-1) protein is dTTP/UTP pyrophosphatase.